A 352-amino-acid chain; its full sequence is uncharacterized protein (352 aa).

A chloroplast-targeting transit peptide spans 1 to 55; sequence MAMAALTSSSSAITLLNKPFLPNRSSFFSSDSQSPLLRFSASTSVRSRFPSAAIS.

This sequence belongs to the methyltransferase superfamily.

It localises to the plastid. The protein localises to the chloroplast. The protein resides in the plastoglobule. This is an uncharacterized protein from Arabidopsis thaliana (Mouse-ear cress).